A 344-amino-acid chain; its full sequence is Gas vesicle ATPase GvpN2 (344 aa).

A disordered region spans residues 1 to 55 (MTDTSRNRKVRGSKIRSSRSDKRQSRGSEDKELKRLADARDTDSEQAGDRVGDAF). Basic residues predominate over residues 7-17 (NRKVRGSKIRS). A compositionally biased stretch (basic and acidic residues) spans 18–52 (SRSDKRQSRGSEDKELKRLADARDTDSEQAGDRVG). ATP is bound at residue 89 to 96 (GPTGCGKT).

It belongs to the CbbQ/NirQ/NorQ/GpvN family. As to quaternary structure, forms homodimers, a GvpN-GvpO heterodimer, interacts with GvpC and GvpL, might interact with GvpA.

It localises to the gas vesicle. The protein localises to the cytoplasm. The catalysed reaction is ATP + H2O = ADP + phosphate + H(+). An ATPase that functions in gas vesicle formation. A minor component of the gas vesicle, also found in soluble extracts. Gas vesicles are hollow, gas filled proteinaceous nanostructures found in several microbial planktonic microorganisms. They allow positioning of halobacteria at the optimal depth for growth in the poorly aerated, shallow brine pools of their habitat. In terms of biological role, expression of 2 c-vac DNA fragments containing 2 divergently transcribed regions (gvpE-gvpF-gvpG-gvpH-gvpI-gvpJ-gvpK-gvpL-gvpM and gvpA-gvpC-gvpN-gvpO) allows H.volcanii to produce gas vesicles. The chain is Gas vesicle ATPase GvpN2 from Halobacterium salinarum (strain ATCC 700922 / JCM 11081 / NRC-1) (Halobacterium halobium).